Consider the following 786-residue polypeptide: Endonuclease MutS2 (786 aa).

Gly335–Thr342 lines the ATP pocket. One can recognise a Smr domain in the interval Leu711 to Lys786.

It belongs to the DNA mismatch repair MutS family. MutS2 subfamily. As to quaternary structure, homodimer. Binds to stalled ribosomes, contacting rRNA.

Its function is as follows. Endonuclease that is involved in the suppression of homologous recombination and thus may have a key role in the control of bacterial genetic diversity. Acts as a ribosome collision sensor, splitting the ribosome into its 2 subunits. Detects stalled/collided 70S ribosomes which it binds and splits by an ATP-hydrolysis driven conformational change. Acts upstream of the ribosome quality control system (RQC), a ribosome-associated complex that mediates the extraction of incompletely synthesized nascent chains from stalled ribosomes and their subsequent degradation. Probably generates substrates for RQC. The polypeptide is Endonuclease MutS2 (Bacillus cereus (strain B4264)).